The following is a 128-amino-acid chain: uncharacterized protein (128 aa).

This is an uncharacterized protein from Enterobacteria phage T4 (Bacteriophage T4).